The sequence spans 616 residues: Chaperone protein HscA (616 aa).

Belongs to the heat shock protein 70 family.

Its function is as follows. Chaperone involved in the maturation of iron-sulfur cluster-containing proteins. Has a low intrinsic ATPase activity which is markedly stimulated by HscB. Involved in the maturation of IscU. The sequence is that of Chaperone protein HscA from Salmonella arizonae (strain ATCC BAA-731 / CDC346-86 / RSK2980).